The primary structure comprises 64 residues: DNA-binding protein 7a (64 aa).

The protein belongs to the 7 kDa DNA-binding/endoribonuclease P2 family. Monomer.

It localises to the cytoplasm. In terms of biological role, can constrain negative DNA supercoils. May be involved in maintaining the integrity of the genome at high temperature. This Saccharolobus islandicus (strain L.D.8.5 / Lassen #2) (Sulfolobus islandicus) protein is DNA-binding protein 7a.